Consider the following 387-residue polypeptide: Succinate--CoA ligase [ADP-forming] subunit beta (387 aa).

In terms of domain architecture, ATP-grasp spans 9-245 (KDLLESYGLK…KSQENAKELK (237 aa)). Residues Lys46, 53–55 (GRG), Glu100, Tyr103, and Glu108 each bind ATP. The Mg(2+) site is built by Asn200 and Asp214. Substrate is bound by residues Asn265 and 322-324 (GIV).

This sequence belongs to the succinate/malate CoA ligase beta subunit family. As to quaternary structure, heterotetramer of two alpha and two beta subunits. Mg(2+) serves as cofactor.

The catalysed reaction is succinate + ATP + CoA = succinyl-CoA + ADP + phosphate. It catalyses the reaction GTP + succinate + CoA = succinyl-CoA + GDP + phosphate. It functions in the pathway carbohydrate metabolism; tricarboxylic acid cycle; succinate from succinyl-CoA (ligase route): step 1/1. Functionally, succinyl-CoA synthetase functions in the citric acid cycle (TCA), coupling the hydrolysis of succinyl-CoA to the synthesis of either ATP or GTP and thus represents the only step of substrate-level phosphorylation in the TCA. The beta subunit provides nucleotide specificity of the enzyme and binds the substrate succinate, while the binding sites for coenzyme A and phosphate are found in the alpha subunit. The chain is Succinate--CoA ligase [ADP-forming] subunit beta from Francisella tularensis subsp. tularensis (strain WY96-3418).